A 2169-amino-acid polypeptide reads, in one-letter code: Voltage-dependent L-type calcium channel subunit alpha-1C (2169 aa).

Over 1–154 (MIRAFAQPST…RACISIVEWK (154 aa)) the chain is Cytoplasmic. A calmodulin-binding region spans residues 77–98 (GAALSWLAAIDAARQAKLMGSA). The interval 104–128 (STVSSTQRKRQQYGKPKKQGGTTAT) is disordered. Residues 110-121 (QRKRQQYGKPKK) show a composition bias toward basic residues. Residues 141-438 (NPIRRACISI…LVLGVLSGEF (298 aa)) form an I repeat. The helical transmembrane segment at 155–173 (PFEIIILLTIFANCVALAI) threads the bilayer. Residues 174 to 188 (YIPFPEDDSNATNSN) are Extracellular-facing. Asn-183 is a glycosylation site (N-linked (GlcNAc...) asparagine). A helical membrane pass occupies residues 189–209 (LERVEYLFLIIFTVEAFLKVI). The Cytoplasmic segment spans residues 210–218 (AYGLLFHPN). A helical transmembrane segment spans residues 219–239 (AYLRNGWNLLDFIIVVVGLFS). At 240-262 (AILEQATKADGANALGGKGAGFD) the chain is on the extracellular side. The chain crosses the membrane as a helical span at residues 263-281 (VKALRAFRVLRPLRLVSGV). The Cytoplasmic portion of the chain corresponds to 282–298 (PSLQVVLNSIIKAMVPL). The helical transmembrane segment at 299–320 (LHIALLVLFVIIIYAIIGLELF) threads the bilayer. Residues 321-380 (MGKMHKTCYNQEGIIDVPAEEDPSPCALETGHGRQCQNGTVCKPGWDGPKHGITNFDNFA) are Extracellular-facing. 2 disulfides stabilise this stretch: Cys-328/Cys-356 and Cys-346/Cys-362. Asn-358 carries an N-linked (GlcNAc...) asparagine glycan. Positions 381–402 (FAMLTVFQCITMEGWTDVLYWM) form an intramembrane region, pore-forming. The Selectivity filter of repeat I signature appears at 391 to 394 (TMEG). Glu-393 contributes to the Ca(2+) binding site. Topologically, residues 403–410 (QDAMGYEL) are extracellular. Residues 411 to 431 (PWVYFVSLVIFGSFFVLNLVL) form a helical membrane-spanning segment. At 432–554 (GVLSGEFSKE…RKCRAAVKSN (123 aa)) the chain is on the cytoplasmic side. The interval 458–475 (QQLEEDLKGYLDWITQAE) is AID/alpha-interaction domain; mediates interaction with the beta subunit. The tract at residues 479 to 511 (PENEDEGMDEDKPRNMSMPTSETESVNTENVAG) is disordered. The span at 495–508 (SMPTSETESVNTEN) shows a compositional bias: polar residues. The residue at position 499 (Ser-499) is a Phosphoserine. Thr-506 is modified (phosphothreonine). An II repeat occupies 540 to 786 (NRFCRRKCRA…LFLAIAVDNL (247 aa)). Residues 555–573 (VFYWLVIFLVFLNTLTIAS) form a helical membrane-spanning segment. Residues 574-584 (EHYNQPHWLTE) lie on the Extracellular side of the membrane. Residues 585 to 605 (VQDTANKALLALFTAEMLLKM) traverse the membrane as a helical segment. Topologically, residues 606 to 616 (YSLGLQAYFVS) are cytoplasmic. Residues 617 to 636 (LFNRFDCFIVCGGILETILV) form a helical membrane-spanning segment. At 637 to 645 (ETKIMSPLG) the chain is on the extracellular side. The helical transmembrane segment at 646–664 (ISCWRCVRLLRIFKITRYW) threads the bilayer. Topologically, residues 665–683 (NSLSNLVASLLNSLRSIAS) are cytoplasmic. The helical transmembrane segment at 684 to 703 (LLLLLFLFIIIFSLLGMQLF) threads the bilayer. Over 704 to 723 (GGKFNFDEMQTRRSTFDNFP) the chain is Extracellular. The pore-forming intramembrane region spans 724 to 745 (QSLLTVFQILTGEDWNSVMYDG). A Selectivity filter of repeat II motif is present at residues 734–737 (TGED). Glu-736 lines the Ca(2+) pocket. Residues 746–755 (IMAYGGPSFP) are Extracellular-facing. The helical transmembrane segment at 756-775 (GMLVCIYFIILFISPNYILL) threads the bilayer. At 776–930 (NLFLAIAVDN…LQCHRIVNDT (155 aa)) the chain is on the cytoplasmic side. Residues 794-891 (SAQKEEEEEK…EMPVGPRPRP (98 aa)) are disordered. Residues 813-836 (SPEKKQEVMEKPAVEESKEEKIEL) are compositionally biased toward basic and acidic residues. Phosphoserine occurs at positions 838 and 845. The tract at residues 859–906 (SENEDKSPHSNPDTAGEEDEEEPEMPVGPRPRPLSELHLKEKAVPMPE) is interaction with STAC2. Residues 873–882 (AGEEDEEEPE) are compositionally biased toward acidic residues. Residues 917-1198 (NRFRLQCHRI…IFVGFVIVTF (282 aa)) form an III repeat. Residues 931-949 (IFTNLILFFILLSSISLAA) form a helical membrane-spanning segment. Residues 950-961 (EDPVQHTSFRNH) are Extracellular-facing. Residues 962-981 (ILFYFDIVFTTIFTIEIALK) form a helical membrane-spanning segment. Topologically, residues 982–997 (MTAYGAFLHKGSFCRN) are cytoplasmic. A helical membrane pass occupies residues 998-1016 (YFNILDLLVVSVSLISFGI). The Extracellular portion of the chain corresponds to 1017-1023 (QSSAINV). Residues 1024–1041 (VKILRVLRVLRPLRINRA) traverse the membrane as a helical segment. Topologically, residues 1042–1060 (KGLKHVVQCVFVAIRTIGN) are cytoplasmic. The chain crosses the membrane as a helical span at residues 1061–1080 (IVIVTTLLQFMFACIGVQLF). Residues 1081–1130 (KGKLYTCSDSSKQTEAESKGNYITYKTGEVDHPIIQPRSWENSKFDFDNV) are Extracellular-facing. A dihydropyridine binding region spans residues 1118–1207 (RSWENSKFDF…FQEQGEQEYK (90 aa)). Residues 1131–1151 (LAAMMALFTVSTFEGWPELLY) constitute an intramembrane region (pore-forming). The Selectivity filter of repeat III motif lies at 1142-1145 (TFEG). Residue Glu-1144 coordinates Ca(2+). The Extracellular segment spans residues 1152-1168 (RSIDSHTEDKGPIYNYR). Residues 1169–1190 (VEISIFFIIYIIIIAFFMMNIF) traverse the membrane as a helical segment. Residues 1191 to 1248 (VGFVIVTFQEQGEQEYKNCELDKNQRQCVEYALKARPLPRYIPKNQHQYKVWYVVNST) lie on the Cytoplasmic side of the membrane. One copy of the IV repeat lies at 1235-1508 (NQHQYKVWYV…LFVAVIMDNF (274 aa)). The chain crosses the membrane as a helical span at residues 1249–1270 (YFEYLMFVLILLNTICLAMQHY). Topologically, residues 1271 to 1278 (GQSCLFKI) are extracellular. A helical membrane pass occupies residues 1279-1300 (AMNILNMLFTGLFTVEMILKLI). At 1301–1310 (AFKPKHYFCD) the chain is on the cytoplasmic side. Residues 1311–1330 (AWNTFDALIVVGSIVDIAIT) form a helical membrane-spanning segment. Over 1331–1353 (EVHPAEHTQCSPSMSAEENSRIS) the chain is Extracellular. A helical transmembrane segment spans residues 1354–1372 (ITFFRLFRVMRLVKLLSRG). Over 1373-1390 (EGIRTLLWTFIKSFQALP) the chain is Cytoplasmic. A helical membrane pass occupies residues 1391–1411 (YVALLIVMLFFIYAVIGMQVF). The Extracellular portion of the chain corresponds to 1412–1433 (GKIALNDTTEINRNNNFQTFPQ). The N-linked (GlcNAc...) asparagine glycan is linked to Asn-1417. The pore-forming intramembrane region spans 1434-1452 (AVLLLFRCATGEAWQDIML). The Selectivity filter of repeat IV signature appears at 1443–1446 (TGEA). Over 1453-1480 (ACMPGKKCAPESEPSNSTEGETPCGSSF) the chain is Extracellular. A dihydropyridine binding region spans residues 1459–1527 (KCAPESEPSN…LGPHHLDEFK (69 aa)). An intrachain disulfide couples Cys-1460 to Cys-1476. N-linked (GlcNAc...) asparagine glycosylation occurs at Asn-1468. The segment at 1473–1515 (ETPCGSSFAVFYFISFYMLCAFLIINLFVAVIMDNFDYLTRDW) is phenylalkylamine binding. The helical transmembrane segment at 1481–1505 (AVFYFISFYMLCAFLIINLFVAVIM) threads the bilayer. The Cytoplasmic portion of the chain corresponds to 1506–2169 (DNFDYLTRDW…PDSRSYVSNL (664 aa)). The tract at residues 1640 to 1667 (DEVTVGKFYATFLIQEYFRKFKKRKEQG) is important for interaction with STAC1, STAC2 and STAC3. The segment at 1640–1673 (DEVTVGKFYATFLIQEYFRKFKKRKEQGLVGKPS) is calmodulin-binding. The segment at 1646 to 1666 (KFYATFLIQEYFRKFKKRKEQ) is calmodulin-binding IQ region. Residues 1680–1699 (LQAGLRTLHDIGPEIRRAIS) are important for localization in at the junctional membrane. 2 positions are modified to phosphoserine: Ser-1699 and Ser-1720. Composition is skewed to polar residues over residues 1761-1770 (KTGNNQADTE) and 1780-1792 (STFT…STGS). The disordered stretch occupies residues 1761–1793 (KTGNNQADTESPSHEKLVDSTFTPSSYSSTGSN). Ser-1927 carries the phosphoserine; by PKA modification. The interval 1970–1998 (RSHSPSTFPRPRPTPPVTPGSRGRPLQPI) is disordered. Positions 1977-1987 (FPRPRPTPPVT) are enriched in pro residues.

The protein belongs to the calcium channel alpha-1 subunit (TC 1.A.1.11) family. CACNA1C subfamily. In terms of assembly, component of a calcium channel complex consisting of a pore-forming alpha subunit (CACNA1C) and ancillary beta, gamma and delta subunits. The channel complex contains alpha, beta, gamma and delta subunits in a 1:1:1:1 ratio, i.e. it contains only one of each type of subunit. CACNA1C channel activity is modulated by ancillary subunits, such as CACNB1, CACNB2, CACNB3, CACNA2D1 and CACNA2D4. Interacts with the gamma subunits CACNG4, CACNG6, CACNG7 and CACNG8. Interacts with CACNB1. Interacts with CACNB2. Identified in a complex with CACNA2D4 and CACNB3. Interacts with CACNB3. Interacts with CACNA2D1. Interacts with CACNA2D4. Interacts with CALM1. Interacts (via the N-terminus and the C-terminal C and IQ motifs) with CABP1; this inhibits Ca(2+)-dependent channel inactivation. The binding via the C motif is calcium independent whereas the binding via IQ requires the presence of calcium and is mutually exclusive with calmodulin binding. The binding to the cytoplasmic N-terminal domain is calcium independent but is essential for the channel modulation. Interacts (via C-terminal CDB motif) with CABP5; in a calcium-dependent manner. Interacts with CIB1; the interaction increases upon cardiomyocytes hypertrophy. Interacts with STAC2 and STAC3; this inhibits channel inactivation. Phosphorylation by PKA at Ser-1927 activates the channel. Elevated levels of blood glucose lead to increased phosphorylation by PKA. Is also phosphorylated in vitro by CaM-kinase II, PKC and CGPK. In terms of tissue distribution, detected in hippocampus and brain cortex, on neuronal cell bodies and dendrites, and in post-synaptic density in brain (at protein level). Isoforms 4 and 5 are expressed throughout the central nervous system, with highest levels in the olfactory bulb and cerebellum. Also expressed in heart, pituitary, adrenal gland, liver, kidney, and in a much lesser extent in testes and spleen.

It localises to the cell membrane. It is found in the sarcolemma. Its subcellular location is the perikaryon. The protein resides in the postsynaptic density membrane. The protein localises to the cell projection. It localises to the dendrite. It is found in the T-tubule. It catalyses the reaction Ca(2+)(in) = Ca(2+)(out). With respect to regulation, inhibited by dihydropyridines (DHP), such as isradipine. Inhibited by nifedipine. Channel activity is regulated by Ca(2+) and calmodulin. Binding of STAC1, STAC2 or STAC3 to a region that overlaps with the calmodulin binding site inhibits channel inactivation by Ca(2+) and calmodulin. Binding of calmodulin or CABP1 at the same regulatory sites results in opposite effects on the channel function. Shear stress and pressure increases calcium channel activity. Its function is as follows. Pore-forming, alpha-1C subunit of the voltage-gated calcium channel that gives rise to L-type calcium currents. Mediates influx of calcium ions into the cytoplasm, and thereby triggers calcium release from the sarcoplasm. Plays an important role in excitation-contraction coupling in the heart. Required for normal heart development and normal regulation of heart rhythm. Required for normal contraction of smooth muscle cells in blood vessels and in the intestine. Essential for normal blood pressure regulation via its role in the contraction of arterial smooth muscle cells. Long-lasting (L-type) calcium channels belong to the 'high-voltage activated' (HVA) group. The sequence is that of Voltage-dependent L-type calcium channel subunit alpha-1C (Cacna1c) from Rattus norvegicus (Rat).